The following is a 493-amino-acid chain: Galactose-1-phosphate uridylyltransferase (493 aa).

This sequence belongs to the galactose-1-phosphate uridylyltransferase type 2 family.

The protein localises to the cytoplasm. It catalyses the reaction alpha-D-galactose 1-phosphate + UDP-alpha-D-glucose = alpha-D-glucose 1-phosphate + UDP-alpha-D-galactose. Its pathway is carbohydrate metabolism; galactose metabolism. The sequence is that of Galactose-1-phosphate uridylyltransferase from Lactococcus lactis subsp. cremoris (strain MG1363).